Here is a 158-residue protein sequence, read N- to C-terminus: GTP-dependent dephospho-CoA kinase (158 aa).

D35, V36, D54, K56, E109, and D132 together coordinate GTP.

This sequence belongs to the GTP-dependent DPCK family.

The enzyme catalyses 3'-dephospho-CoA + GTP = GDP + CoA + H(+). It participates in cofactor biosynthesis; coenzyme A biosynthesis. Catalyzes the GTP-dependent phosphorylation of the 3'-hydroxyl group of dephosphocoenzyme A to form coenzyme A (CoA). This Methanococcus maripaludis (strain C7 / ATCC BAA-1331) protein is GTP-dependent dephospho-CoA kinase.